The primary structure comprises 88 residues: Co-chaperonin GroES (88 aa).

The protein belongs to the GroES chaperonin family. As to quaternary structure, heptamer of 7 subunits arranged in a ring. Interacts with the chaperonin GroEL.

It is found in the cytoplasm. In terms of biological role, together with the chaperonin GroEL, plays an essential role in assisting protein folding. The GroEL-GroES system forms a nano-cage that allows encapsulation of the non-native substrate proteins and provides a physical environment optimized to promote and accelerate protein folding. GroES binds to the apical surface of the GroEL ring, thereby capping the opening of the GroEL channel. The sequence is that of Co-chaperonin GroES from Treponema pallidum (strain Nichols).